The sequence spans 483 residues: Keratin, type II cytoskeletal 8 (483 aa).

Over residues 1 to 25 the composition is skewed to polar residues; sequence MSVRVTQKSYKMSTSGPRAFSSRSF. The tract at residues 1–43 is disordered; that stretch reads MSVRVTQKSYKMSTSGPRAFSSRSFTSGPGARISSSSFSRVGS. Residues 1–90 are head; that stretch reads MSVRVTQKSY…DPNIQAVRTQ (90 aa). Ser-9 carries the post-translational modification Phosphoserine; by PKC/PRKCE. Lys-11 is covalently cross-linked (Glycyl lysine isopeptide (Lys-Gly) (interchain with G-Cter in SUMO2)). Residues Ser-13, Ser-15, Ser-21, and Ser-22 each carry the phosphoserine modification. Arg-23 is modified (omega-N-methylarginine). At Ser-24 the chain carries Phosphoserine; by PKC/PRKCE. Ser-24 carries the phosphoserine modification. Position 26 is a phosphothreonine (Thr-26). Positions 26 to 43 are enriched in low complexity; that stretch reads TSGPGARISSSSFSRVGS. A Phosphoserine modification is found at Ser-27. Arg-32 is modified (omega-N-methylarginine). Phosphoserine occurs at positions 34, 37, and 39. The residue at position 40 (Arg-40) is an Omega-N-methylarginine. Ser-43, Ser-44, and Ser-47 each carry phosphoserine. Arg-49 is modified (asymmetric dimethylarginine; alternate). At Arg-49 the chain carries Omega-N-methylarginine; alternate. Ser-51 carries the phosphoserine modification. Residues 91–126 form a coil 1A region; it reads EKEQIKTLNNKFASFIDKVRFLEQQNKMLETKWSLL. Residues 91 to 402 enclose the IF rod domain; it reads EKEQIKTLNN…KLLEGEESRL (312 aa). An N6-malonyllysine modification is found at Lys-101. Residues Lys-122 and Lys-130 each participate in a glycyl lysine isopeptide (Lys-Gly) (interchain with G-Cter in SUMO2) cross-link. Residues 127-143 form a linker 1 region; sequence QQQKTSRSNMDNMFESY. The segment at 144–235 is coil 1B; sequence INNLRRQLEA…QIHEEEIREL (92 aa). Lys-197 is covalently cross-linked (Glycyl lysine isopeptide (Lys-Gly) (interchain with G-Cter in SUMO1); alternate). Lys-197 participates in a covalent cross-link: Glycyl lysine isopeptide (Lys-Gly) (interchain with G-Cter in SUMO2); alternate. Residue Lys-207 is modified to N6-acetyllysine. The segment at 236–259 is linker 12; the sequence is QSQISDTSVVLSMDNSRSLDMDSI. A phosphoserine mark is found at Ser-253, Ser-258, and Ser-274. Residues 260-398 form a coil 2 region; it reads IAEVRAQYEE…ATYRKLLEGE (139 aa). The interval 261–382 is necessary for interaction with PNN; sequence AEVRAQYEEI…EYQELMNVKL (122 aa). A Glycyl lysine isopeptide (Lys-Gly) (interchain with G-Cter in SUMO2) cross-link involves residue Lys-285. Lys-295 participates in a covalent cross-link: Glycyl lysine isopeptide (Lys-Gly) (interchain with G-Cter in SUMO2); alternate. Lys-295 is subject to N6-acetyllysine; alternate. Lys-304 participates in a covalent cross-link: Glycyl lysine isopeptide (Lys-Gly) (interchain with G-Cter in SUMO2). A Glycyl lysine isopeptide (Lys-Gly) (interchain with G-Cter in SUMO2); alternate cross-link involves residue Lys-325. The residue at position 325 (Lys-325) is an N6-acetyllysine; alternate. A Glycyl lysine isopeptide (Lys-Gly) (interchain with G-Cter in SUMO2) cross-link involves residue Lys-393. The interval 399–483 is tail; the sequence is ESRLESGMQN…VSESSDIMSK (85 aa). Residues Ser-400, Ser-404, Ser-410, Ser-417, Ser-424, Ser-426, and Ser-432 each carry the phosphoserine modification. Lys-472 is covalently cross-linked (Glycyl lysine isopeptide (Lys-Gly) (interchain with G-Cter in SUMO1); alternate). Residue Lys-472 forms a Glycyl lysine isopeptide (Lys-Gly) (interchain with G-Cter in SUMO2); alternate linkage. 4 positions are modified to phosphoserine: Ser-475, Ser-477, Ser-478, and Ser-482.

Belongs to the intermediate filament family. Heterotetramer of two type I and two type II keratins. Forms a heterodimer with KRT18. Associates with KRT20. Interacts with PNN. When associated with KRT19, interacts with DMD. Interacts with TCHP. Interacts with APEX1. Interacts with GPER1. Interacts with EPPK1. Interacts with PKP1 and PKP2. In terms of processing, O-glycosylated. O-GlcNAcylation at multiple sites increases solubility, and decreases stability by inducing proteasomal degradation. Post-translationally, O-glycosylated (O-GlcNAcylated), in a cell cycle-dependent manner. In terms of tissue distribution, expressed in cardiac and striated muscle. Expressed at Z-lines within the muscle fibers and at Z-line and M-line domains at costameres at the sarcolemmal membrane (at protein level). Observed in coagulating gland, bladder, salivary gland, kidney, spleen, thymus, lung and heart. Also observed in ventral prostate, seminal vesicle and liver where expression increases following castration.

The protein localises to the cytoplasm. It localises to the nucleus. It is found in the nucleoplasm. The protein resides in the nucleus matrix. Its function is as follows. Together with KRT19, helps to link the contractile apparatus to dystrophin at the costameres of striated muscle. The sequence is that of Keratin, type II cytoskeletal 8 (Krt8) from Rattus norvegicus (Rat).